The primary structure comprises 143 residues: UPF0201 protein Msed_1787 (143 aa).

This sequence belongs to the UPF0201 family.

The protein is UPF0201 protein Msed_1787 of Metallosphaera sedula (strain ATCC 51363 / DSM 5348 / JCM 9185 / NBRC 15509 / TH2).